Here is a 498-residue protein sequence, read N- to C-terminus: MYVSSLLFLYASESYESFIFHFQMCYNKAHNGFMPSIFQQLKGLGEGLQWKVGISLDHQEKQTSSHEKEMTSPNSATRLIPSDWRRELLAGTVSFFAAVYIIIVNSSILADAGIPQEAGIIATILASAIGCFIMGLWGNAPLVIVPGMGINAMFTYTLVQGMGLTWQQALAAVMMSGICFFAISMTSLVEKLRTAIPASLQEAISVGIGLMLVLIGLHKGGVIASDRSSVIAVQSFADPGVLVTLATLALTCILYIRKVPGNLLLAIIGGSALAYLFKAVPSKAATGVGGSSWSSYGDLFGQLSVKGASITTLVIAVFSLTLVIVFENVGLINAQLKMSGRTERFKRVTQATSLTVILSGIFGTSPTVSTVEAAAGISAGGRTGWASIATGTLFLLSFIAMPVITLVPDQAVAPILIFIGGLMMPAVRHISFERMEEGLPAFFIIAFIPLMHSIVDGIAIGFISYALFHIAVGKWREVKPLFYIISLLFVMHFVLQTM.

The next 13 helical transmembrane spans lie at 88–108 (LLAG…NSSI), 118–138 (AGII…GLWG), 142–162 (LVIV…VQGM), 169–189 (ALAA…TSLV), 203–223 (AISV…GGVI), 236–256 (FADP…ILYI), 259–279 (VPGN…LFKA), 312–332 (TLVI…VGLI), 357–377 (ILSG…AAGI), 388–408 (IATG…TLVP), 412–432 (VAPI…HISF), 443–463 (FIIA…IGFI), and 478–498 (VKPL…LQTM).

This sequence belongs to the nucleobase:cation symporter-2 (NCS2) (TC 2.A.40) family. Azg-like subfamily.

The protein resides in the cell membrane. With respect to regulation, inhibited by the proton gradient disruptor carbonyl cyanide m-chlorophenylhydrazone (CCCP), but not by the sodium gradient disruptor ouabain. Its function is as follows. Transports adenine, guanine, hypoxanthine, xanthine, cytosine and uracil. Transport is probably proton-dependent. In Paenibacillus larvae subsp. larvae (strain NRRL B-3650 / LMG 16245), this protein is Nucleobase transporter PlAzg2.